A 247-amino-acid chain; its full sequence is Small ribosomal subunit protein uS2 (247 aa).

The protein belongs to the universal ribosomal protein uS2 family.

The protein is Small ribosomal subunit protein uS2 of Ectopseudomonas mendocina (strain ymp) (Pseudomonas mendocina).